A 778-amino-acid polypeptide reads, in one-letter code: LPS-assembly protein LptD (778 aa).

The first 23 residues, 1–23 (MKTRYSVLSVAMTAAFYTQYAQA), serve as a signal peptide directing secretion.

This sequence belongs to the LptD family. Component of the lipopolysaccharide transport and assembly complex. Interacts with LptE and LptA.

Its subcellular location is the cell outer membrane. Its function is as follows. Together with LptE, is involved in the assembly of lipopolysaccharide (LPS) at the surface of the outer membrane. In Actinobacillus pleuropneumoniae serotype 7 (strain AP76), this protein is LPS-assembly protein LptD.